We begin with the raw amino-acid sequence, 371 residues long: Alginate lyase (371 aa).

Positions 1–26 are cleaved as a signal peptide; that stretch reads MQSTDLKRLLIPSLLGLAIVTGSAQA. Substrate is bound by residues 67 to 68, 140 to 141, and Tyr-258; these read SK and HT.

It belongs to the polysaccharide lyase 5 family.

The protein localises to the periplasm. The enzyme catalyses Eliminative cleavage of alginate to give oligosaccharides with 4-deoxy-alpha-L-erythro-hex-4-enuronosyl groups at their non-reducing ends and beta-D-mannuronate at their reducing end.. Functionally, catalyzes the depolymerization of alginate by cleaving the beta-1,4 glycosidic bond between two adjacent sugar residues via a beta-elimination mechanism. May serve to degrade mislocalized alginate that is trapped in the periplasmic space. This Pseudomonas fluorescens (strain ATCC BAA-477 / NRRL B-23932 / Pf-5) protein is Alginate lyase.